Reading from the N-terminus, the 122-residue chain is Large ribosomal subunit protein uL14 (122 aa).

This sequence belongs to the universal ribosomal protein uL14 family. Part of the 50S ribosomal subunit. Forms a cluster with proteins L3 and L19. In the 70S ribosome, L14 and L19 interact and together make contacts with the 16S rRNA in bridges B5 and B8.

In terms of biological role, binds to 23S rRNA. Forms part of two intersubunit bridges in the 70S ribosome. This is Large ribosomal subunit protein uL14 from Phenylobacterium zucineum (strain HLK1).